The following is a 191-amino-acid chain: Putative manganese efflux pump MntP (191 aa).

The next 6 membrane-spanning stretches (helical) occupy residues 3 to 23 (PISI…AAIG), 37 to 57 (LRAG…GWLL), 65 to 85 (VEAF…IHMI), 107 to 129 (WKLA…GLAF), 144 to 164 (CTLT…SMVG), and 169 to 189 (IIGG…HLHG).

The protein belongs to the MntP (TC 9.B.29) family.

The protein localises to the cell inner membrane. Probably functions as a manganese efflux pump. This chain is Putative manganese efflux pump MntP, found in Stenotrophomonas maltophilia (strain R551-3).